We begin with the raw amino-acid sequence, 223 residues long: Glutathione-specific gamma-glutamylcyclotransferase 1 (223 aa).

The tract at residues 1–26 is disordered; it reads MKQESASQSTPPPSLSPAPSSAQPSW. 36–41 contributes to the substrate binding site; that stretch reads IFGYGS. The active-site Proton acceptor is glutamate 116.

This sequence belongs to the gamma-glutamylcyclotransferase family. ChaC subfamily. Interacts with NOTCH1 (via extracellular region). In terms of tissue distribution, widely expressed, with high expression in forebrain and anterior spinal cord. Expressed at intermediate level in the dorsal aorta and heart. Present throughout adult brain (at protein level).

The protein localises to the cytoplasm. The protein resides in the cytosol. It is found in the golgi apparatus. Its subcellular location is the trans-Golgi network. The enzyme catalyses glutathione = L-cysteinylglycine + 5-oxo-L-proline. In terms of biological role, catalyzes the cleavage of glutathione into 5-oxo-L-proline and a Cys-Gly dipeptide. Acts specifically on glutathione, but not on other gamma-glutamyl peptides. Glutathione depletion is an important factor for apoptosis initiation and execution. Acts as a pro-apoptotic component of the unfolded protein response pathway by mediating the pro-apoptotic effects of the ATF4-ATF3-DDIT3/CHOP cascade. Negative regulator of Notch signaling pathway involved in embryonic neurogenesis: acts by inhibiting Notch cleavage by furin, maintaining Notch in an immature inactive form, thereby promoting neurogenesis in embryos. This Mus musculus (Mouse) protein is Glutathione-specific gamma-glutamylcyclotransferase 1.